The chain runs to 281 residues: 2-dehydro-3-deoxyphosphooctonate aldolase (281 aa).

It belongs to the KdsA family.

It is found in the cytoplasm. It catalyses the reaction D-arabinose 5-phosphate + phosphoenolpyruvate + H2O = 3-deoxy-alpha-D-manno-2-octulosonate-8-phosphate + phosphate. It functions in the pathway carbohydrate biosynthesis; 3-deoxy-D-manno-octulosonate biosynthesis; 3-deoxy-D-manno-octulosonate from D-ribulose 5-phosphate: step 2/3. The protein operates within bacterial outer membrane biogenesis; lipopolysaccharide biosynthesis. This Pseudomonas paraeruginosa (strain DSM 24068 / PA7) (Pseudomonas aeruginosa (strain PA7)) protein is 2-dehydro-3-deoxyphosphooctonate aldolase.